The following is a 722-amino-acid chain: Zinc finger BED domain-containing protein RICESLEEPER 2 (722 aa).

The BED-type zinc-finger motif lies at 66–134; that stretch reads RKKSLVWEHF…QEHKLALTPA (69 aa). 4 residues coordinate Zn(2+): cysteine 89, cysteine 92, histidine 113, and histidine 127. Positions 572 to 592 are disordered; it reads VEQGDGNNAPASENGTQATAP. The span at 576–592 shows a compositional bias: polar residues; that stretch reads DGNNAPASENGTQATAP. An HATC (Hobo-Ac-Tam3) domain region spans residues 617-702; it reads ELEQYLDESL…EALVCAKDWL (86 aa).

As to quaternary structure, homodimer.

It localises to the nucleus. Functionally, transposase-like protein that is essential for plant growth and development. May regulate global gene expression by recruiting other cellular factors. The polypeptide is Zinc finger BED domain-containing protein RICESLEEPER 2 (Oryza sativa subsp. japonica (Rice)).